The following is a 249-amino-acid chain: Proteasome subunit alpha type-7-1A (249 aa).

The protein belongs to the peptidase T1A family. As to quaternary structure, the 26S proteasome consists of a 20S proteasome core and two 19S regulatory subunits. The 20S proteasome core is composed of 28 subunits that are arranged in four stacked rings, resulting in a barrel-shaped structure. The two end rings are each formed by seven alpha subunits, and the two central rings are each formed by seven beta subunits. The catalytic chamber with the active sites is on the inside of the barrel. In terms of tissue distribution, testis specific.

It localises to the cytoplasm. It is found in the nucleus. Functionally, the proteasome is a multicatalytic proteinase complex which is characterized by its ability to cleave peptides with Arg, Phe, Tyr, Leu, and Glu adjacent to the leaving group at neutral or slightly basic pH. The proteasome has an ATP-dependent proteolytic activity. This Drosophila melanogaster (Fruit fly) protein is Proteasome subunit alpha type-7-1A (Prosalpha4T1).